The following is a 276-amino-acid chain: NH(3)-dependent NAD(+) synthetase (276 aa).

Position 39–46 (39–46 (GLSGGVDS)) interacts with ATP. Aspartate 45 contacts Mg(2+). Arginine 123 lines the deamido-NAD(+) pocket. Residue threonine 143 coordinates ATP. Residue glutamate 148 coordinates Mg(2+). Positions 156 and 163 each coordinate deamido-NAD(+). ATP contacts are provided by lysine 172 and serine 194. 254–255 (HK) contacts deamido-NAD(+).

The protein belongs to the NAD synthetase family. In terms of assembly, homodimer.

The enzyme catalyses deamido-NAD(+) + NH4(+) + ATP = AMP + diphosphate + NAD(+) + H(+). Its pathway is cofactor biosynthesis; NAD(+) biosynthesis; NAD(+) from deamido-NAD(+) (ammonia route): step 1/1. Its function is as follows. Catalyzes the ATP-dependent amidation of deamido-NAD to form NAD. Uses ammonia as a nitrogen source. In Hyperthermus butylicus (strain DSM 5456 / JCM 9403 / PLM1-5), this protein is NH(3)-dependent NAD(+) synthetase.